We begin with the raw amino-acid sequence, 261 residues long: Immediate-early protein IE-0 (261 aa).

An RING-type zinc finger spans residues C212–R257.

As to quaternary structure, interacts with proteins C42 and FP25. Interacts with host beta-tubulin. Interacts with Ac66 and vUb.

Its subcellular location is the host nucleus. It is found in the host cytoplasm. The protein localises to the virion. In terms of biological role, putative viral E3 ligase that plays an essential regulatory role in both viral DNA replication and transcriptional transactivation. The role in transcription has been shown to include activation of gene expression from early viral promoters. Also promotes the efficient egress of nucleocapsids from the host nucleus. May act as an E3 ligase that promotes ubiquitination of nucleocapsids proteins by vUbi and subsequent viral egress for the host nucleus. This chain is Immediate-early protein IE-0 (IE0), found in Lepidoptera (butterflies and moths).